A 1537-amino-acid chain; its full sequence is Leucine-rich repeat-containing protein 7 (1537 aa).

LRR repeat units follow at residues I23–F44, T47–C68, A70–L91, N93–C114, C116–L137, N139–V161, K162–L183, Q185–I206, N208–L229, M231–E253, A254–L275, K277–L298, L300–L321, S323–C344, N346–M367, K369–K391, and E392–A413. Phosphoserine occurs at positions 439, 441, and 443. The span at K663–H676 shows a compositional bias: basic and acidic residues. Disordered regions lie at residues K663–L709, F730–P759, A786–L810, and E824–V892. Residues C677 to L709 are compositionally biased toward polar residues. The span at N790–S804 shows a compositional bias: low complexity. A Phosphothreonine modification is found at T831. Phosphoserine is present on S850. The segment covering P859 to L871 has biased composition (low complexity). Position 865 is a phosphothreonine (T865). S869 is subject to Phosphoserine. The segment covering P872 to T882 has biased composition (basic and acidic residues). Residues S947, S949, and S1118 each carry the phosphoserine modification. The tract at residues E1136–T1159 is disordered. Position 1149 is an omega-N-methylarginine (R1149). Phosphoserine is present on S1233. 2 disordered regions span residues D1234–K1265 and Q1331–G1360. The segment covering K1243–C1263 has biased composition (basic and acidic residues). Polar residues predominate over residues K1332–W1354. 2 positions are modified to phosphoserine: S1335 and S1439. The PDZ domain occupies E1445–L1535.

The protein belongs to the LAP (LRR and PDZ) protein family. As to quaternary structure, interacts with CNKSR2 and DLG4. Interacts with CTNND2/Catenin delta-2. Forms a complex with N-cadherin through CTNND2. Interacts with CAMK2A. As to expression, brain-specific. Isoform 3 is ubiquitously expressed.

The protein resides in the cytoplasm. Its subcellular location is the postsynaptic density. Required for normal synaptic spine architecture and function. Necessary for DISC1 and GRM5 localization to postsynaptic density complexes and for both N-methyl D-aspartate receptor-dependent and metabotropic glutamate receptor-dependent long term depression. In Homo sapiens (Human), this protein is Leucine-rich repeat-containing protein 7 (LRRC7).